The primary structure comprises 201 residues: UPF0301 protein Atu0781 (201 aa).

Belongs to the UPF0301 (AlgH) family.

This Agrobacterium fabrum (strain C58 / ATCC 33970) (Agrobacterium tumefaciens (strain C58)) protein is UPF0301 protein Atu0781.